Reading from the N-terminus, the 399-residue chain is Protein LIGULELESS 1 (399 aa).

Residues 1–28 form a disordered region; sequence MMNLSAAANGRDEFPPYVVPSNAAAPPP. The segment covering 15–24 has biased composition (low complexity); the sequence is PPYVVPSNAA. An SBP-type zinc finger spans residues 182 to 260; sequence PPRCQAEGCK…ADHNRRRRKS (79 aa). Residues Cys-185, Cys-190, Cys-207, His-210, Cys-227, Cys-230, His-234, and Cys-246 each coordinate Zn(2+). The short motif at 243–259 is the Bipartite nuclear localization signal element; sequence KKSCRKRLADHNRRRRK. The segment at 250–292 is disordered; sequence LADHNRRRRKSKPSDADAGDKKRAHANKAAAAKDKAESSSKNM. Basic and acidic residues predominate over residues 261–270; that stretch reads KPSDADAGDK.

As to expression, leaf ligular region, blade and sheath.

Its subcellular location is the nucleus. Involved in the formation of ligules and auricles during leaf organogenesis. The chain is Protein LIGULELESS 1 (LG1) from Zea mays (Maize).